Reading from the N-terminus, the 658-residue chain is Threonine--tRNA ligase (658 aa).

Residues 1-64 form the TGS domain; that stretch reads MLNSVSLTFP…GKSGKVEIIT (64 aa). Residues 246 to 549 form a catalytic region; sequence DHRKLGREMD…LIENYSGHFP (304 aa). 3 residues coordinate Zn(2+): Cys-343, His-394, and His-526.

The protein belongs to the class-II aminoacyl-tRNA synthetase family. As to quaternary structure, homodimer. Zn(2+) is required as a cofactor.

It localises to the cytoplasm. It catalyses the reaction tRNA(Thr) + L-threonine + ATP = L-threonyl-tRNA(Thr) + AMP + diphosphate + H(+). In terms of biological role, catalyzes the attachment of threonine to tRNA(Thr) in a two-step reaction: L-threonine is first activated by ATP to form Thr-AMP and then transferred to the acceptor end of tRNA(Thr). Also edits incorrectly charged L-seryl-tRNA(Thr). This chain is Threonine--tRNA ligase, found in Mesorhizobium japonicum (strain LMG 29417 / CECT 9101 / MAFF 303099) (Mesorhizobium loti (strain MAFF 303099)).